A 61-amino-acid polypeptide reads, in one-letter code: Conotoxin LiC32 (61 aa).

Positions 1-22 (MRCVPVFIILLLLSPSAPSVDA) are cleaved as a signal peptide. Positions 23-44 (HPKTKDDVPLASFHDDAKRTLQ) are excised as a propeptide. The residue at position 60 (Cys-60) is a Cysteine amide.

It belongs to the conotoxin T superfamily. In terms of processing, contains 2 disulfide bonds that can be either 'C1-C3, C2-C4' or 'C1-C4, C2-C3', since these disulfide connectivities have been observed for conotoxins with cysteine framework V (for examples, see AC P0DQQ7 and AC P81755). In terms of tissue distribution, expressed by the venom duct.

The protein localises to the secreted. In terms of biological role, has the ability to interact with the G-protein coupled somatostatin type 3 receptor (SSTR3). The ability was measured in competition binding experiments and the constant of inhibition (Ki) has been evaluated to be 3.5 uM. The protein is Conotoxin LiC32 of Conus lividus (Livid cone).